The chain runs to 236 residues: Large ribosomal subunit protein uL1 (236 aa).

The protein belongs to the universal ribosomal protein uL1 family. As to quaternary structure, part of the 50S ribosomal subunit.

Its function is as follows. Binds directly to 23S rRNA. The L1 stalk is quite mobile in the ribosome, and is involved in E site tRNA release. Functionally, protein L1 is also a translational repressor protein, it controls the translation of the L11 operon by binding to its mRNA. In Corynebacterium jeikeium (strain K411), this protein is Large ribosomal subunit protein uL1.